We begin with the raw amino-acid sequence, 426 residues long: Divalent metal cation transporter MntH (426 aa).

10 helical membrane-spanning segments follow: residues 31–51, 58–78, 134–156, 169–189, 208–228, 256–276, 298–318, 337–357, 363–383, and 402–422; these read WYLL…GNVA, AQFG…AGLV, ILFR…LLLM, VITG…FVAT, SVLL…VYLH, VILA…VAAI, LGAT…LASA, IPML…LALG, ALVL…LPLV, and TVLG…LIYL.

It belongs to the NRAMP family.

It is found in the cell membrane. In terms of biological role, h(+)-stimulated, divalent metal cation uptake system. This chain is Divalent metal cation transporter MntH, found in Mycobacterium leprae (strain TN).